We begin with the raw amino-acid sequence, 202 residues long: Small ribosomal subunit protein uS4 (202 aa).

The disordered stretch occupies residues 15-42; the sequence is LGDLPGLTRKAAKRSYPPGQHGQARRKR. One can recognise an S4 RNA-binding domain in the interval 90–152; that stretch reads NRLDNVCFRI…KCSKLLAEAN (63 aa).

The protein belongs to the universal ribosomal protein uS4 family. Part of the 30S ribosomal subunit. Contacts protein S5. The interaction surface between S4 and S5 is involved in control of translational fidelity.

In terms of biological role, one of the primary rRNA binding proteins, it binds directly to 16S rRNA where it nucleates assembly of the body of the 30S subunit. Its function is as follows. With S5 and S12 plays an important role in translational accuracy. The chain is Small ribosomal subunit protein uS4 from Synechococcus sp. (strain CC9311).